An 835-amino-acid chain; its full sequence is MRVPYSWLCEVVTVGAPDWDVSASDLKQTLVRIGHEIEEMITVGPVDGPLTVGRVTDIEELTGFKKPIRACVVDVGDGQQHEIICGATNFVVGDLVVVAFPGTTLPDGFAIAACETYGRHSAGMICSAAELRLSTDHSGILVLPPGTALPGADGADVLGLDDVVFRLAITPDRGYCMSVRGLAREIACAYDLAFVDPASDQAVPPLPVGGQAWPVTVQPETGVRRCALRPVTGIDFAAVSPWWLQRRLLLSGIRAISPAVDVTNYVMLELGHPLHAHDRNRITGGFTVRFARPGETIVTIDGIERQLDPVDVLIVDNVTTAAIGGVMGAASTEVRSDSTDVLLEAAVWDPARVSHTQRRLHLPSEAARRYERAVDPAISVAALDRCAMLLADIAGGTVSETLTDWRGSPPRADWSLPPIRIAVDLPDRIAGVVYNQGATTKRLTQIGAVVVDTVSSEGHTLTVTPPSWRPDLLQPSDLVEEVLRLEGLEVIRSVRPLAPAGRGLTAVQKRYRAIGKVLAQSGYVEILPTPFLPADVFDLWGLPADDPRRTTTRVLNPLESNRPQLATTLLPALLEALVSNVSRGIIDVALFAIAQVVEPTEWTGGIGSIPVDRRLTDAEIALLDASLPRQPQHVAAVLAGLREPRGPWGPGRLAEASDAFEAVRIIARVSGVDVFFRAVQYLPWHPGRCAEVFVGETPIGHAGQLHPAVIERAGLPKGICAIELDLAAMPIVEGLPAPQVSPFPAVLQDVSLVVSTQVPAQEVQDAIRDGAGELLEDIQLFDVFTGSQIGEDCKSLTFALRFRAPDRTLTEDDASAARDAAVRHAAERVGATLRT.

The 115-residue stretch at 44–158 folds into the tRNA-binding domain; it reads GPVDGPLTVG…LPGADGADVL (115 aa). A B5 domain is found at 414 to 493; the sequence is WSLPPIRIAV…RLEGLEVIRS (80 aa). Mg(2+) contacts are provided by Asp-471, Asp-477, Glu-480, and Glu-481. The 94-residue stretch at 741–834 folds into the FDX-ACB domain; it reads SPFPAVLQDV…AAERVGATLR (94 aa).

It belongs to the phenylalanyl-tRNA synthetase beta subunit family. Type 1 subfamily. Tetramer of two alpha and two beta subunits. The cofactor is Mg(2+).

Its subcellular location is the cytoplasm. The catalysed reaction is tRNA(Phe) + L-phenylalanine + ATP = L-phenylalanyl-tRNA(Phe) + AMP + diphosphate + H(+). The protein is Phenylalanine--tRNA ligase beta subunit of Mycobacterium leprae (strain TN).